A 924-amino-acid polypeptide reads, in one-letter code: MADYKHTLNLPQTDFPMRGNLAQREPEQLRWWQEHEIYRKQREAFADCPTFMLHDGPPYANGQIHVGHALNKTLKDIIIKSRHLLGYNSPYVPGWDCHGLPIEQKVEQKIGKPNQKVSATEFRAACRRYAAEQVALQKDGFMRLGIFGFWDQPYLTMNFETEAQIVRALRDIVAAGHVTQGFKPINWCFDCASSLAEAEVEYQDKTSYSIDVAFAVKDVAALAKIMHADVVPAAVDVVIWTTTPWTLPANVAVSIHPEFYYVLVEIEGWYCVVAEELIPALKSRWKKSADWRICGRALGKDLDRLTLRHPFIDRDVLLINGTHVTLDAGTGCVHTAPAHGVEDYDVCQQYGIDLIHCVLGNGLYNDDTPHFAGQHIFAAEPQIIELLQTQNRLIAVEKITHSYPHCWRHKTPTIYRATTQWFISMDKAGLRQKALDGLNEVAFTPDWGKPRLLNMIAHRPDWCISRQRYWGVPLCFVVDKQTGQLHPDIVNIMDKAASAIEQKGVEAWYELSLDTLLSGKEVDRYEKLNDVLDVWFDSGTTHYSVLKKRAELSYPADLYLEGSDQHRGWFHSSLLTASAITGKPPYKALLTHGFTVDEDGRKMSKSLGNVVDPNQVIKTLGADILRLWVASADYTAEVSLSPNILNQRADAYRRMRNTCRFLLANLHDFDPEKNSVAYEKLLPLDRYVIAVAHDLQEKIKKLYVSYDFHLIYQEIFNFCSVMLGGFYLDVIKDRQYTVAQNALARRSAQTAIFHIIEAMVRWLAPILSFTAEEIWRYLPGKREESVFLTKFYEGLQPLNDDFLSMHDWELLLQLREKVNAALEKARNQGIIGGSLEAMVVLHLPPQEYEIAARFEQELRFILIVSAVNVQPSAALSIEVQHAIGEKCERCWHYLPDVGTDHQHPTLCKRCIENVDGGGELRRFA.

Positions 58–68 (PYANGQIHVGH) match the 'HIGH' region motif. Glutamate 561 lines the L-isoleucyl-5'-AMP pocket. Residues 602-606 (KMSKS) carry the 'KMSKS' region motif. Lysine 605 contributes to the ATP binding site. Zn(2+)-binding residues include cysteine 887, cysteine 890, cysteine 907, and cysteine 910.

Belongs to the class-I aminoacyl-tRNA synthetase family. IleS type 1 subfamily. Monomer. Zn(2+) is required as a cofactor.

Its subcellular location is the cytoplasm. It catalyses the reaction tRNA(Ile) + L-isoleucine + ATP = L-isoleucyl-tRNA(Ile) + AMP + diphosphate. Its function is as follows. Catalyzes the attachment of isoleucine to tRNA(Ile). As IleRS can inadvertently accommodate and process structurally similar amino acids such as valine, to avoid such errors it has two additional distinct tRNA(Ile)-dependent editing activities. One activity is designated as 'pretransfer' editing and involves the hydrolysis of activated Val-AMP. The other activity is designated 'posttransfer' editing and involves deacylation of mischarged Val-tRNA(Ile). In Dichelobacter nodosus (strain VCS1703A), this protein is Isoleucine--tRNA ligase.